The chain runs to 1004 residues: E3 ubiquitin-protein ligase NEDD4-like (1004 aa).

One can recognise a C2 domain in the interval 30–154; it reads LASHHSRGLE…TEDPTMERPY (125 aa). 2 disordered regions span residues 207–230 and 272–407; these read SNDSASQHQEELPPPPLPPGWEEK and AAHR…TPSV. Residues 221 to 254 form the WW 1 domain; it reads PPLPPGWEEKVDNLGRTYYVNHNNRSTQWHRPSL. The residue at position 341 (Ser-341) is a Phosphoserine. A Phosphothreonine modification is found at Thr-347. Polar residues-rich tracts occupy residues 347 to 359 and 366 to 376; these read TPDSNGEQFSSLI and RLRSCSVTDTV. Phosphoserine; by WNK1 and WNK4 is present on Ser-371. Thr-396 is subject to Phosphothreonine; by SGK1. A WW 2 domain is found at 414–447; sequence PGLPSGWEERKDAKGRTYYVNHNNRTTTWTRPIM. The tract at residues 453–523 is disordered; that stretch reads GASGSATNSN…YNSPKPQHKV (71 aa). Ser-475 bears the Phosphoserine mark. Ser-477 is modified (phosphoserine; by SGK1). Residues Ser-478, Ser-493, Ser-504, Ser-508, Ser-512, and Ser-516 each carry the phosphoserine modification. Basic and acidic residues predominate over residues 489-500; sequence GAKDSPIRRAVK. 2 WW domains span residues 526 to 559 and 577 to 610; these read SFLPPGWEMRIAPNGRPFFIDHNTKTTTWEDPRL and GPLPPGWEERIHLDGRTFYIDHNSKITQWEDPRL. Residues 669-1003 form the HECT domain; that stretch reads RPDVLKARLW…VENAQGFEGV (335 aa). Cys-971 functions as the Glycyl thioester intermediate in the catalytic mechanism.

In terms of assembly, interacts with UBE2E3. Interacts with NDFIP1; this interaction activates the E3 ubiquitin-protein ligase. Interacts with NDFIP2; this interaction activates the E3 ubiquitin-protein ligase. Interacts (via WW domains) with SCN1A. Interacts (via WW domains) with SCN2A. Interacts (via WW domains) with SCN3A. Interacts (via WW domains) with SCN5A. Interacts (via WW domains) with SCN8A. Interacts (via WW domains) with SCN9A. Interacts (via WW domains) with SCN10A. Interacts (via WW domains) with CLCN5. Interacts with SMAD2. Interacts with SMAD3. Interacts with SMAD6. Interacts with SMAD7. The phosphorylated form interacts with 14-3-3 proteins. Interacts with TNK2. Interacts with WNK1. Interacts with SGK1. Interacts (via C2 domain) with NPC2. Interacts with ARRDC4. Interacts with KCNQ1; promotes internalization of KCNQ1. Interacts (via domains WW1, 3 and 4) with USP36; the interaction inhibits ubiquitination of, at least, NTRK1, KCNQ2 and KCNQ3 by NEDD4L. Interacts with PRRG4 (via cytoplasmic domain). Interacts with LDLRAD3; the interaction is direct. Interacts with UBE2D2. Interacts with TTYH2 and TTYH3. Phosphorylated; which impairs interaction with SCNN. Interaction with YWHAH inhibits dephosphorylation. Aldosterone induces Ser-477 phosphorylation by SGK1. In terms of processing, auto-ubiquitinated. Deubiquitinated by USP36, no effect on NEDD4L protein levels. Both proteins interact and regulate each other's ubiquitination levels. As to expression, highly expressed in liver and kidney. Also expressed in heart, brain and lung. Isoform 1 is expressed in kidney, lung and gut. Isoform 3 is ubiquitously expressed.

Its subcellular location is the cytoplasm. It is found in the golgi apparatus. The protein localises to the endosome. It localises to the multivesicular body. The catalysed reaction is S-ubiquitinyl-[E2 ubiquitin-conjugating enzyme]-L-cysteine + [acceptor protein]-L-lysine = [E2 ubiquitin-conjugating enzyme]-L-cysteine + N(6)-ubiquitinyl-[acceptor protein]-L-lysine.. It carries out the reaction [E2 ubiquitin-conjugating enzyme]-S-ubiquitinyl-L-cysteine + [acceptor protein]-L-cysteine = [E2 ubiquitin-conjugating enzyme]-L-cysteine + [acceptor protein]-S-ubiquitinyl-L-cysteine.. It participates in protein modification; protein ubiquitination. Its activity is regulated as follows. Activated by NDFIP1- and NDFIP2-binding. Functionally, E3 ubiquitin-protein ligase that mediates the polyubiquitination of lysine and cysteine residues on target proteins and is thereby implicated in the regulation of various signaling pathways including autophagy, innate immunity or DNA repair. Inhibits TGF-beta signaling by triggering SMAD2 and TGFBR1 ubiquitination and proteasome-dependent degradation. Downregulates autophagy and cell growth by ubiquitinating and reducing cellular ULK1 or ASCT2 levels. Promotes ubiquitination and internalization of various plasma membrane channels such as ENaC, SCN2A/Nav1.2, SCN3A/Nav1.3, SCN5A/Nav1.5, SCN9A/Nav1.7, SCN10A/Nav1.8, KCNA3/Kv1.3, KCNH2, EAAT1, KCNQ2/Kv7.2, KCNQ3/Kv7.3 or CLC5. Promotes ubiquitination and degradation of SGK1 and TNK2. Ubiquitinates BRAT1 and this ubiquitination is enhanced in the presence of NDFIP1. Plays a role in dendrite formation by melanocytes. Involved in the regulation of TOR signaling. Ubiquitinates and regulates protein levels of NTRK1 once this one is activated by NGF. Plays a role in antiviral innate immunity by catalyzing 'Lys-29'-linked cysteine ubiquitination of TRAF3, resulting in enhanced 'Lys-48' and 'Lys-63'-linked ubiquitination of TRAF3. Ubiquitinates TTYH2 and TYYH3 and regulates protein levels of TTYH2. This is E3 ubiquitin-protein ligase NEDD4-like (Nedd4l) from Mus musculus (Mouse).